The following is a 134-amino-acid chain: Small ribosomal subunit protein uS12 (134 aa).

3-methylthioaspartic acid is present on Asp89. The disordered stretch occupies residues 103 to 134; sequence DTAGVKDRKQGRSKYGAKRPKPGEAAATGKKK. Positions 113-122 are enriched in basic residues; the sequence is GRSKYGAKRP.

Belongs to the universal ribosomal protein uS12 family. In terms of assembly, part of the 30S ribosomal subunit. Contacts proteins S8 and S17. May interact with IF1 in the 30S initiation complex.

In terms of biological role, with S4 and S5 plays an important role in translational accuracy. Interacts with and stabilizes bases of the 16S rRNA that are involved in tRNA selection in the A site and with the mRNA backbone. Located at the interface of the 30S and 50S subunits, it traverses the body of the 30S subunit contacting proteins on the other side and probably holding the rRNA structure together. The combined cluster of proteins S8, S12 and S17 appears to hold together the shoulder and platform of the 30S subunit. The chain is Small ribosomal subunit protein uS12 from Thermosynechococcus vestitus (strain NIES-2133 / IAM M-273 / BP-1).